The primary structure comprises 252 residues: 2-succinyl-6-hydroxy-2,4-cyclohexadiene-1-carboxylate synthase (252 aa).

Belongs to the AB hydrolase superfamily. MenH family. Monomer.

It carries out the reaction 5-enolpyruvoyl-6-hydroxy-2-succinyl-cyclohex-3-ene-1-carboxylate = (1R,6R)-6-hydroxy-2-succinyl-cyclohexa-2,4-diene-1-carboxylate + pyruvate. It participates in quinol/quinone metabolism; 1,4-dihydroxy-2-naphthoate biosynthesis; 1,4-dihydroxy-2-naphthoate from chorismate: step 3/7. It functions in the pathway quinol/quinone metabolism; menaquinone biosynthesis. Functionally, catalyzes a proton abstraction reaction that results in 2,5-elimination of pyruvate from 2-succinyl-5-enolpyruvyl-6-hydroxy-3-cyclohexene-1-carboxylate (SEPHCHC) and the formation of 2-succinyl-6-hydroxy-2,4-cyclohexadiene-1-carboxylate (SHCHC). This is 2-succinyl-6-hydroxy-2,4-cyclohexadiene-1-carboxylate synthase from Shigella sonnei (strain Ss046).